The sequence spans 21 residues: Ferredoxin (21 aa).

In terms of domain architecture, 4Fe-4S ferredoxin-type spans 2–21 (KVKVDADACIGCGVCVELCP). The [4Fe-4S] cluster site is built by Cys-10, Cys-13, and Cys-16.

Monomer. It depends on [4Fe-4S] cluster as a cofactor.

Its function is as follows. Ferredoxins are iron-sulfur proteins that transfer electrons in a wide variety of metabolic reactions. This Pyrococcus woesei protein is Ferredoxin (fdxA).